Reading from the N-terminus, the 1317-residue chain is WASH complex subunit 2 (1317 aa).

Residues 1-219 (MNRTSPDSER…VGSDRGSIVD (219 aa)) form a sufficient for interaction with WASHC3, WASHC4 and WASHC5; required for interaction with WASHC1 region. A phosphoserine mark is found at Ser157, Ser159, Ser204, Ser205, and Ser209. Residues 201 to 213 (GELSSEEGSVGSD) are compositionally biased toward low complexity. The disordered stretch occupies residues 201–630 (GELSSEEGSV…RKSKGELWDS (430 aa)). Composition is skewed to acidic residues over residues 219–232 (DSEE…SDED) and 250–274 (DEEE…EDIE). Ser284 carries the post-translational modification Phosphoserine. Basic and acidic residues-rich tracts occupy residues 289–325 (LAAR…RTPP) and 366–376 (DLFRETSRDRP). Phosphothreonine is present on Thr323. The interval 348–582 (SRGGLFSGQG…QVSSQQPQSQ (235 aa)) is sufficient for interaction with CCDC93. The interaction with VPS35 stretch occupies residues 349 to 1317 (RGGLFSGQGL…DDPLNAFGSQ (969 aa)). Positions 358-368 (LFDDEDESDLF) match the LFa 1 motif. Low complexity predominate over residues 379–399 (APVSEESSSPKPGKKIPAGAV). Ser385 and Ser387 each carry phosphoserine. Short sequence motifs (LFa) lie at residues 433 to 445 (LFDD…DNFF) and 464 to 473 (IFDDEEGDLF). The segment covering 500–518 (TLPSSKNPKLVSETKTQKG) has biased composition (polar residues). 2 short sequence motifs (LFa) span residues 519-530 (LFSDEEDSEDLF) and 554-565 (LFGDEDEEDNLF). Phosphoserine occurs at positions 521 and 526. The span at 529–548 (LFSSQNSSKSKSASLLSSQL) shows a compositional bias: low complexity. Positions 569-582 (PAKKQVSSQQPQSQ) are enriched in low complexity. The span at 583–592 (EKPKPSEQPK) shows a compositional bias: basic and acidic residues. Positions 599 to 611 (LFSSDEEDQWNIT) match the LFa 6 motif. Residues Ser601 and Ser602 each carry the phosphoserine modification. A compositionally biased stretch (basic and acidic residues) spans 613-627 (SHTKLATDRKSKGEL). Short sequence motifs (LFa) lie at residues 646–657 (LFEEDDDEADLF) and 673–685 (LFED…SSLF). The tract at residues 667 to 817 (TQRTSLLFED…GRPKSTGVFQ (151 aa)) is disordered. Ser710 is modified (phosphoserine). Basic and acidic residues predominate over residues 717 to 744 (VPSRVKSVDVKVGNGKEADVAKVTEKEG). Phosphoserine occurs at positions 763 and 778. A compositionally biased stretch (basic and acidic residues) spans 788–810 (EDQSNTHVSKNDAEKGLKTDGRP). Short sequence motifs (LFa) lie at residues 815–823 (VFQDEELLF) and 832–838 (DPDVDLF). Ser853 carries the post-translational modification Phosphoserine. Positions 854 to 864 (LFGDDEDYDLF) match the LFa 11 motif. Disordered regions lie at residues 867–926 (AKTQ…REPS) and 960–1079 (ELAF…AAPP). The span at 874-906 (PEKKGALKKDRPVSLKNEEAPESTEGSKEKSLW) shows a compositional bias: basic and acidic residues. The interaction with phospholipids stretch occupies residues 912-1317 (QDSSGLTPFK…DDPLNAFGSQ (406 aa)). A compositionally biased stretch (basic residues) spans 1003-1021 (NKSRVKVRGKRRPQTRAAR). The segment at 1004–1022 (KSRVKVRGKRRPQTRAARR) is required for interaction with F-actin-capping protein subunit alpha (CAPZA1 or CAPZA2 or CAPZA3). A phosphoserine mark is found at Ser1029, Ser1047, Ser1064, and Ser1092. The short motif at 1107-1114 (LFDSGDIF) is the LFa 12 element. Residues 1119–1141 (GSQSMEGTKVKAAETPAHLSGGS) are disordered. 6 short sequence motifs (LFa) span residues 1147–1161 (VFPA…DDLF), 1177–1185 (LLEDEDDLF), 1210–1216 (IFEDDIF), 1238–1246 (LFDDNIDIF), 1266–1275 (VFDDDTDDIF), and 1306–1314 (IFDDPLNAF). A phosphoserine mark is found at Ser1152, Ser1155, and Ser1156. The tract at residues 1158–1183 (DDLFQTVKPRPAKKRNPFPLLEDEDD) is disordered. Positions 1277–1317 (SGLQAKKSKPKSQSAEATSELRSDHKVSNIFDDPLNAFGSQ) are disordered. A Phosphoserine modification is found at Ser1316.

The protein belongs to the FAM21 family. Component of the WASH core complex also described as WASH regulatory complex SHRC composed of WASHC1, WASHC2, WASHC3, WASHC4 and WASHC5; in the complex interacts (via N-terminus) directly with WASHC1. The WASH core complex associates via WASHC2 with the F-actin-capping protein dimer (formed by CAPZA1, CAPZA2 or CAPZA3 and CAPZB) in a transient or substoichiometric manner which was initially described as WASH complex. Interacts with VPS35; mediates the association with the retromer CSC complex. Interacts with FKBP15. Interacts with CCDC93, CCDC22, C16orf62 homolog; indicative for an association of the WASH core complex with the CCC complex. Directly interacts with TBC1D23.

The protein resides in the early endosome membrane. It localises to the cell membrane. Its function is as follows. Acts as a component of the WASH core complex that functions as a nucleation-promoting factor (NPF) at the surface of endosomes, where it recruits and activates the Arp2/3 complex to induce actin polymerization, playing a key role in the fission of tubules that serve as transport intermediates during endosome sorting. Mediates the recruitment of the WASH core complex to endosome membranes via binding to phospholipids and VPS35 of the retromer CSC. Mediates the recruitment of the F-actin-capping protein dimer to the WASH core complex probably promoting localized F-actin polymerization needed for vesicle scission. Via its C-terminus binds various phospholipids, most strongly phosphatidylinositol 4-phosphate (PtdIns-(4)P), phosphatidylinositol 5-phosphate (PtdIns-(5)P) and phosphatidylinositol 3,5-bisphosphate (PtdIns-(3,5)P2). Involved in the endosome-to-plasma membrane trafficking and recycling of SNX27-retromer-dependent cargo proteins, such as GLUT1. Required for the association of DNAJC13, ENTR1, ANKRD50 with retromer CSC subunit VPS35. Required for the endosomal recruitment of CCC complex subunits COMMD1, CCDC93 and C16orf62 homolog. The sequence is that of WASH complex subunit 2 from Cricetulus griseus (Chinese hamster).